Here is a 210-residue protein sequence, read N- to C-terminus: Thymidylate kinase (210 aa).

An ATP-binding site is contributed by 11–18; the sequence is GLEGAGKS.

Belongs to the thymidylate kinase family.

It carries out the reaction dTMP + ATP = dTDP + ADP. Functionally, phosphorylation of dTMP to form dTDP in both de novo and salvage pathways of dTTP synthesis. This Histophilus somni (strain 2336) (Haemophilus somnus) protein is Thymidylate kinase.